Consider the following 192-residue polypeptide: Interferon epsilon (192 aa).

A signal peptide spans methionine 1–serine 21. Cysteine 52 and cysteine 162 form a disulfide bridge.

It belongs to the alpha/beta interferon family. Expressed at very high levels in uterus and, at much lower levels, in ovary and cervix. Very low levels, if any, in other organs. In the endometrium, expressed in the luminal and glandular epithelial cells (at protein level).

The protein localises to the secreted. Its function is as follows. Type I interferon required for maintaining basal levels of IFN-regulated genes, including 2'-5'-oligoadenylate synthetase, IRF7 and ISG15, in the female reproductive tract. Directly mediates protection against viral, including HSV-2, and bacterial, including Chlamydia muridarum, genital infections. The chain is Interferon epsilon (Ifne) from Mus musculus (Mouse).